The following is a 660-amino-acid chain: 1-deoxy-D-xylulose-5-phosphate synthase (660 aa).

Thiamine diphosphate contacts are provided by residues His86 and Ala127 to Ser129. Asp164 serves as a coordination point for Mg(2+). Residues Gly165–Ser166, Asn196, Tyr306, and Glu388 contribute to the thiamine diphosphate site. A Mg(2+)-binding site is contributed by Asn196.

It belongs to the transketolase family. DXPS subfamily. As to quaternary structure, homodimer. Requires Mg(2+) as cofactor. The cofactor is thiamine diphosphate.

It catalyses the reaction D-glyceraldehyde 3-phosphate + pyruvate + H(+) = 1-deoxy-D-xylulose 5-phosphate + CO2. Its pathway is metabolic intermediate biosynthesis; 1-deoxy-D-xylulose 5-phosphate biosynthesis; 1-deoxy-D-xylulose 5-phosphate from D-glyceraldehyde 3-phosphate and pyruvate: step 1/1. In terms of biological role, catalyzes the acyloin condensation reaction between C atoms 2 and 3 of pyruvate and glyceraldehyde 3-phosphate to yield 1-deoxy-D-xylulose-5-phosphate (DXP). This is 1-deoxy-D-xylulose-5-phosphate synthase from Gluconobacter oxydans (strain 621H) (Gluconobacter suboxydans).